The primary structure comprises 115 residues: MQKDSGPLVPLHYYGFGYAALVATGGIIGYAKAGSVPSLAAGLFFGGLAGLGAYQLSQDPRNVWVFLATSGTLAGIMGMRFYNSGKFMPAGLIAGASLLMVAPGVAKIQEITTMP.

4 consecutive transmembrane segments (helical) span residues 8–28, 33–53, 63–83, and 88–108; these read LVPLHYYGFGYAALVATGGII, AGSVPSLAAGLFFGGLAGLGA, VWVFLATSGTLAGIMGMRFYN, and MPAGLIAGASLLMVAPGVAKI.

It belongs to the TMEM14 family.

The protein resides in the mitochondrion membrane. Its function is as follows. Required for normal heme biosynthesis. The chain is Transmembrane protein 14C (Tmem14c) from Rattus norvegicus (Rat).